A 254-amino-acid chain; its full sequence is tRNA (guanine-N(1)-)-methyltransferase (254 aa).

S-adenosyl-L-methionine contacts are provided by residues Gly-112 and 131–136 (IGDYIL).

The protein belongs to the RNA methyltransferase TrmD family. Homodimer.

It is found in the cytoplasm. It carries out the reaction guanosine(37) in tRNA + S-adenosyl-L-methionine = N(1)-methylguanosine(37) in tRNA + S-adenosyl-L-homocysteine + H(+). Functionally, specifically methylates guanosine-37 in various tRNAs. The protein is tRNA (guanine-N(1)-)-methyltransferase of Sulfurihydrogenibium sp. (strain YO3AOP1).